The primary structure comprises 295 residues: MTSTINKPLDGEGSVQVKQDPKINIEEGALVIAVYGKGGIGKSTTSSNLSAAFSKLGKKVLQIGCDPKHDSTFTLTHKMVPTVIDILEEVDFHSEELRPTDFMFEGFNGVMCVESGGPPAGTGCGGYVTGQTVKLLKEHHLLEDTDVVIFDVLGDVVCGGFAAPLQHANYCLIVTANDFDSIFAMNRIVSAIKAKAKNYKVRLGGVVANRSKDTDQIDKFNERTGLKTMAHFKDVDAIRRSRLKKCTIFEMEPTEDVIEVQNEYLSLAKNMLENVEPLEGNPLKDREIFDLLGFD.

ATP is bound by residues 39–44 and Lys-68; that span reads GIGKST. Ser-43 is a Mg(2+) binding site. The [4Fe-4S] cluster site is built by Cys-124 and Cys-158. 209–210 is an ATP binding site; that stretch reads NR.

This sequence belongs to the NifH/BchL/ChlL family. As to quaternary structure, homodimer. Protochlorophyllide reductase is composed of three subunits; ChlL, ChlN and ChlB. [4Fe-4S] cluster serves as cofactor.

It catalyses the reaction chlorophyllide a + oxidized 2[4Fe-4S]-[ferredoxin] + 2 ADP + 2 phosphate = protochlorophyllide a + reduced 2[4Fe-4S]-[ferredoxin] + 2 ATP + 2 H2O. The protein operates within porphyrin-containing compound metabolism; chlorophyll biosynthesis (light-independent). Component of the dark-operative protochlorophyllide reductase (DPOR) that uses Mg-ATP and reduced ferredoxin to reduce ring D of protochlorophyllide (Pchlide) to form chlorophyllide a (Chlide). This reaction is light-independent. The L component serves as a unique electron donor to the NB-component of the complex, and binds Mg-ATP. This Prochlorococcus marinus (strain MIT 9312) protein is Light-independent protochlorophyllide reductase iron-sulfur ATP-binding protein.